Here is a 208-residue protein sequence, read N- to C-terminus: Heart- and neural crest derivatives-expressed protein 2 (208 aa).

Disordered stretches follow at residues 79 to 106 (AGAV…TQSI) and 161 to 197 (EFKK…RTGW). Positions 88 to 103 (TVKRRPTANRKERRRT) are enriched in basic residues. In terms of domain architecture, bHLH spans 90–142 (KRRPTANRKERRRTQSINSAFAELRECIPNVPADTKLSKIKTLRLATSYIAYL). Over residues 161 to 178 (EFKKTDAKEERRKKEMND) the composition is skewed to basic and acidic residues.

Efficient DNA binding requires dimerization with another bHLH protein.

It is found in the nucleus. Its function is as follows. Essential for myocardial and pectoral fin differentiation, patterning and morphogenesis. This Danio rerio (Zebrafish) protein is Heart- and neural crest derivatives-expressed protein 2 (hand2).